The sequence spans 319 residues: MTPRHLLTAADLSRDDATAILDDADRFAQALVGRDIKKLPTLRGRTVVTMFYENSTRTRVSFEVAGKWMSADVINVSAAGSSVGKGESLRDTALTLRAAGADALIIRHPASGAAHLLAQWTGAHNDGPAVINAGDGTHEHPTQALLDALTIRQRLGGIEGRRIVIVGDILHSRVARSNVMLLDTLGAEVVLVAPPTLLPVGVTGWPATVSHDFDAELPAADAVLMLRVQAERMNGGFFPSVREYSVRYGLTERRQAMLPGHAVVLHPGPMVRGMEITSSVADSSQSAVLQQVSNGVQVRMAVLFHVLVGAQDAGKEGAA.

Carbamoyl phosphate-binding residues include arginine 57 and threonine 58. Lysine 85 contributes to the L-aspartate binding site. Arginine 107, histidine 140, and glutamine 143 together coordinate carbamoyl phosphate. L-aspartate is bound by residues arginine 173 and arginine 227. Glycine 268 and proline 269 together coordinate carbamoyl phosphate.

It belongs to the aspartate/ornithine carbamoyltransferase superfamily. ATCase family. As to quaternary structure, heterododecamer (2C3:3R2) of six catalytic PyrB chains organized as two trimers (C3), and six regulatory PyrI chains organized as three dimers (R2).

It carries out the reaction carbamoyl phosphate + L-aspartate = N-carbamoyl-L-aspartate + phosphate + H(+). It functions in the pathway pyrimidine metabolism; UMP biosynthesis via de novo pathway; (S)-dihydroorotate from bicarbonate: step 2/3. Functionally, catalyzes the condensation of carbamoyl phosphate and aspartate to form carbamoyl aspartate and inorganic phosphate, the committed step in the de novo pyrimidine nucleotide biosynthesis pathway. The sequence is that of Aspartate carbamoyltransferase catalytic subunit from Mycobacterium tuberculosis (strain ATCC 25177 / H37Ra).